We begin with the raw amino-acid sequence, 610 residues long: Glutamine--fructose-6-phosphate aminotransferase [isomerizing] (610 aa).

Catalysis depends on Cys2, which acts as the Nucleophile; for GATase activity. Positions 2–221 (CGIVGAVAQR…DGDVVDLQLA (220 aa)) constitute a Glutamine amidotransferase type-2 domain. SIS domains follow at residues 286 to 426 (AYKV…TRGR) and 459 to 600 (WADR…VDKP). Lys605 serves as the catalytic For Fru-6P isomerization activity.

In terms of assembly, homodimer.

The protein resides in the cytoplasm. The catalysed reaction is D-fructose 6-phosphate + L-glutamine = D-glucosamine 6-phosphate + L-glutamate. Catalyzes the first step in hexosamine metabolism, converting fructose-6P into glucosamine-6P using glutamine as a nitrogen source. The chain is Glutamine--fructose-6-phosphate aminotransferase [isomerizing] from Bordetella pertussis (strain Tohama I / ATCC BAA-589 / NCTC 13251).